A 265-amino-acid polypeptide reads, in one-letter code: Mlc titration factor A (265 aa).

Residues His-111, His-148, His-152, and Glu-211 each contribute to the Zn(2+) site.

Belongs to the MtfA family. As to quaternary structure, interacts with Mlc. Zn(2+) is required as a cofactor.

It is found in the cytoplasm. Involved in the modulation of the activity of the glucose-phosphotransferase system (glucose-PTS). Interacts with the transcriptional repressor Mlc, preventing its interaction with DNA and leading to the modulation of expression of genes regulated by Mlc, including ptsG, which encodes the PTS system glucose-specific EIICB component. Functionally, shows zinc-dependent metallopeptidase activity. The chain is Mlc titration factor A from Klebsiella pneumoniae (strain 342).